The sequence spans 1306 residues: Synergin gamma (1306 aa).

A coiled-coil region spans residues 113–153 (MQKQFAEEQQKRFEQQQKLLEEERKRRQFEEQKQKLRLLSS). 2 disordered regions span residues 176–196 (GFSR…KQGP) and 252–285 (SGPA…PAQS). Residues 258 to 272 (EAEKTSDQTLSKEES) show a composition bias toward basic and acidic residues. An EH domain is found at 293–404 (NESLVPDAYK…TPVSQPTAMP (112 aa)). A DFXDF motif 1 motif is present at residues 455-459 (DFQDF). The disordered stretch occupies residues 460 to 494 (QDASKSGSIDDSFTDFQEMPASSKTSNSQHGNSAP). A Phosphoserine modification is found at S471. N6-acetyllysine is present on K509. Residues 514–778 (KGISTDKPSE…ADFHSSKFSS (265 aa)) form an interaction with AP1G1 region. Residues 559-601 (STGTDDGFTDFKTADSVSPLEPPTKDTFPSAFASGAAQQTQTQ) form a disordered region. Residue S576 is modified to Phosphoserine. The tract at residues 661–673 (LADDFGEFNLFGE) is interaction with AP1G1, AP1G2 and GGA1. A DFXDF motif 2 motif is present at residues 685-689 (DFADF). The segment at 697–730 (ISSEPKASDKYEALREEVSPSPLSSSTVEGAQHP) is disordered. Positions 702-714 (KASDKYEALREEV) are enriched in basic and acidic residues. S715 carries the post-translational modification Phosphoserine. K736 bears the N6-acetyllysine mark. S744 and S764 each carry phosphoserine. Positions 767 to 771 (DFADF) match the DFXDF motif 3 motif. Residues S804, S844, S847, S901, S911, S927, S974, S998, S1065, S1067, S1079, and S1090 each carry the phosphoserine modification. Disordered regions lie at residues 986 to 1016 (PTVD…ADDF) and 1065 to 1090 (SLSL…RDRS). Residues 993–1005 (ETSCPSPASSVAS) show a composition bias toward polar residues. Residue T1092 is modified to Phosphothreonine.

Self-associates. Interacts with GGA1 (via GAE domain). Interacts with GGA2 and GGA3. Interacts with AP1G1 (via GAE domain), a subunit of adapter protein complex AP-1. Interacts with AP1G2 (via GAE domain) a subunit of adapter protein complex AP-1. Component of the aftiphilin/p200/gamma-synergin complex, at least composed of AFTPH/aftiphilin, HEATR5B/p200a and SYNRG/gamma-synergin, which plays a role in the AP1G1/AP-1-mediated trafficking of transferrin from early to recycling endosomes. Within the complex interacts with AFTPH/aftiphilin and HEATR5B/p200a; the interactions are direct. Interacts (via EH domain) with SCAMP1.

The protein localises to the cytoplasm. It localises to the cytosol. Its subcellular location is the golgi apparatus. The protein resides in the trans-Golgi network membrane. It is found in the perinuclear region. The protein localises to the cytoplasmic vesicle. It localises to the clathrin-coated vesicle. In terms of biological role, plays a role in endocytosis and/or membrane trafficking at the trans-Golgi network (TGN). May act by linking the adapter protein complex AP-1 to other proteins. Component of clathrin-coated vesicles. Component of the aftiphilin/p200/gamma-synergin complex, which plays roles in AP1G1/AP-1-mediated protein trafficking including the trafficking of transferrin from early to recycling endosomes, and the membrane trafficking of furin and the lysosomal enzyme cathepsin D between the trans-Golgi network (TGN) and endosomes. The chain is Synergin gamma (Synrg) from Mus musculus (Mouse).